Here is a 517-residue protein sequence, read N- to C-terminus: Probable mannosyltransferase KTR7 (517 aa).

Topologically, residues 1-23 (MAIRLNPKVRRFLLDKCRQKRYG) are cytoplasmic. The helical; Signal-anchor for type II membrane protein transmembrane segment at 24 to 44 (FLFLGCIFAILYCMGTWPFFA) threads the bilayer. Residues 45 to 85 (KDIVHDPNNLPYSLQDYSTDKDEPFFRGCTDTKLYLQNPAY) form a stem region region. The Lumenal portion of the chain corresponds to 45 to 517 (KDIVHDPNNL…IRRENFRVIE (473 aa)). Residues 86-517 (SKMNASFVML…IRRENFRVIE (432 aa)) form a catalytic region. N-linked (GlcNAc...) asparagine glycans are attached at residues asparagine 89 and asparagine 144. Residue glutamate 367 is the Nucleophile of the active site.

Belongs to the glycosyltransferase 15 family.

The protein localises to the membrane. Its function is as follows. Possible glycosyltransferase that transfers an alpha-D-mannosyl residue from GDP-mannose into lipid-linked oligosaccharide, forming an alpha-(1-&gt;2)-D-mannosyl-D-mannose linkage. This chain is Probable mannosyltransferase KTR7 (KTR7), found in Saccharomyces cerevisiae (strain ATCC 204508 / S288c) (Baker's yeast).